Reading from the N-terminus, the 270-residue chain is Nuclease PA3 (270 aa).

A divalent metal cation contacts are provided by W1, H6, H15, D45, and H60. W1–H6 contributes to the substrate binding site. Residues D45–S51, H60–D63, and N73–R78 contribute to the substrate site. 2 disulfide bridges follow: C72–C217 and C80–C85. A substrate-binding site is contributed by N92. The N-linked (GlcNAc...) asparagine glycan is linked to N92. Residues H116, D120, and H126 each coordinate a divalent metal cation. Positions H116–H164 are substrate binding. N-linked (GlcNAc...) asparagine glycosylation occurs at N138. H149 and D153 together coordinate a divalent metal cation. Residues N184 and N197 are each glycosylated (N-linked (GlcNAc...) asparagine).

Belongs to the nuclease type I family. Zn(2+) serves as cofactor.

It localises to the secreted. The catalysed reaction is a ribonucleoside 3'-phosphate + H2O = a ribonucleoside + phosphate. Functionally, hydrolyzes only single-stranded DNA and RNA without apparent specificity for bases. This is Nuclease PA3 from Penicillium sp.